A 421-amino-acid chain; its full sequence is UDP-N-acetylglucosamine 1-carboxyvinyltransferase (421 aa).

22 to 23 serves as a coordination point for phosphoenolpyruvate; that stretch reads KN. Residue Arg-95 coordinates UDP-N-acetyl-alpha-D-glucosamine. Cys-119 (proton donor) is an active-site residue. Cys-119 is modified (2-(S-cysteinyl)pyruvic acid O-phosphothioketal). Residues 124–128, Asp-309, and Ile-331 each bind UDP-N-acetyl-alpha-D-glucosamine; that span reads RPVDQ.

Belongs to the EPSP synthase family. MurA subfamily.

The protein localises to the cytoplasm. It catalyses the reaction phosphoenolpyruvate + UDP-N-acetyl-alpha-D-glucosamine = UDP-N-acetyl-3-O-(1-carboxyvinyl)-alpha-D-glucosamine + phosphate. It functions in the pathway cell wall biogenesis; peptidoglycan biosynthesis. Its function is as follows. Cell wall formation. Adds enolpyruvyl to UDP-N-acetylglucosamine. In Leptothrix cholodnii (strain ATCC 51168 / LMG 8142 / SP-6) (Leptothrix discophora (strain SP-6)), this protein is UDP-N-acetylglucosamine 1-carboxyvinyltransferase.